A 428-amino-acid chain; its full sequence is MRVQRPKGTVDILPETSGQWEKVEQTARDLFKRANYHEIRTPSFENYELFSRSSGETSDVVEKEMYDFEDKGGRHIALRPEGTAGVVRAYVENKIYGPDYVKPFNVYYIAAMYRYERPQAGRQREFHQIGVESFGSNGYLADVETILLGHDLLAELGVKNYELHINTLGDSEVRQAYHDALVDYFTPVKDQLSEDSQRRLGKNPLRILDSKAEEDQQFLSEAPKIRDYLDEESKENFNKILASLDKLGVKYVIDDDLVRGLDYYTGVIFEFMVDDPTLWASPSTVLGGGRYNHLVEEFSGPETPAVGFGIGEERLMLVLSKQNPEMFEDQGIDFFITNIGEGTDIKAVEVARQLRSLGFSAQYDVDQKKLKAQFRKADRVGARYVVTLGAKELAEGKLTVKRLSDGQQFSLEFTDLEDKANLLSKIEK.

It belongs to the class-II aminoacyl-tRNA synthetase family. In terms of assembly, homodimer.

Its subcellular location is the cytoplasm. It catalyses the reaction tRNA(His) + L-histidine + ATP = L-histidyl-tRNA(His) + AMP + diphosphate + H(+). The polypeptide is Histidine--tRNA ligase (Lactobacillus delbrueckii subsp. bulgaricus (strain ATCC BAA-365 / Lb-18)).